Reading from the N-terminus, the 434-residue chain is Glutamate-1-semialdehyde 2,1-aminomutase (434 aa).

Lys-265 carries the N6-(pyridoxal phosphate)lysine modification.

It belongs to the class-III pyridoxal-phosphate-dependent aminotransferase family. HemL subfamily. In terms of assembly, homodimer. Pyridoxal 5'-phosphate is required as a cofactor.

Its subcellular location is the cytoplasm. It carries out the reaction (S)-4-amino-5-oxopentanoate = 5-aminolevulinate. The protein operates within porphyrin-containing compound metabolism; protoporphyrin-IX biosynthesis; 5-aminolevulinate from L-glutamyl-tRNA(Glu): step 2/2. The polypeptide is Glutamate-1-semialdehyde 2,1-aminomutase (Ruminiclostridium cellulolyticum (strain ATCC 35319 / DSM 5812 / JCM 6584 / H10) (Clostridium cellulolyticum)).